We begin with the raw amino-acid sequence, 122 residues long: Large ribosomal subunit protein uL14 (122 aa).

The protein belongs to the universal ribosomal protein uL14 family. As to quaternary structure, part of the 50S ribosomal subunit. Forms a cluster with proteins L3 and L19. In the 70S ribosome, L14 and L19 interact and together make contacts with the 16S rRNA in bridges B5 and B8.

In terms of biological role, binds to 23S rRNA. Forms part of two intersubunit bridges in the 70S ribosome. In Paramagnetospirillum magneticum (strain ATCC 700264 / AMB-1) (Magnetospirillum magneticum), this protein is Large ribosomal subunit protein uL14.